A 735-amino-acid chain; its full sequence is F-box and leucine-rich repeat protein 13 (735 aa).

One can recognise an F-box domain in the interval 152-198; it reads KCDISLLPERAILQIFFYLSLKDVIICGQVNHAWMLMTQLNSLWNAI. LRR repeat units lie at residues 230–254, 255–280, 281–305, 306–333, 334–359, 360–385, 386–406, 410–435, 436–460, 461–488, 489–514, 515–538, 539–563, 564–589, 590–615, 616–641, and 642–667; these read GCLL…NVSD, CPTF…NLSN, TTIT…SLAY, CRRF…DLSG, CTQI…TIND, MPTL…VFTG, APHI…RKIR, NKRV…YMAD, CKGI…NLAN, CVRI…NLSN, CVRL…SLRN, CEHL…IDLS, GTDI…SVSE, CYRI…DVSY, CSQL…SIAG, CPKI…DISG, and CVLL…KMQY. Residues 682-692 show a composition bias toward polar residues; that stretch reads KVQQQEYNTND. Residues 682 to 703 are disordered; sequence KVQQQEYNTNDPPRWFGYDREG.

Belongs to the DRC6 family. Component of the nexin-dynein regulatory complex (N-DRC). Directly interacts with SKP1 and CUL1. Interacts with TCTE1/DRC5.

It is found in the cytoplasm. Its subcellular location is the cytoskeleton. The protein localises to the flagellum axoneme. The protein resides in the microtubule organizing center. It localises to the centrosome. Substrate-recognition component of the SCF (SKP1-CUL1-F-box protein)-type E3 ubiquitin ligase complex. Component of the nexin-dynein regulatory complex (N-DRC), a key regulator of ciliary/flagellar motility which maintains the alignment and integrity of the distal axoneme and regulates microtubule sliding in motile axonemes. Specifically targets CEP192 isoform 3 for ubiquitin-mediated proteolysis and thereby acts as a regulator of microtubule nucleation activity. The sequence is that of F-box and leucine-rich repeat protein 13 (FBXL13) from Homo sapiens (Human).